The following is a 353-amino-acid chain: uncharacterized protein (353 aa).

Residues Cys-40, His-70, Cys-100, Cys-103, Cys-106, Cys-114, and Cys-158 each contribute to the Zn(2+) site.

The protein belongs to the zinc-containing alcohol dehydrogenase family. The cofactor is Zn(2+).

This is an uncharacterized protein from Escherichia coli (strain K12).